We begin with the raw amino-acid sequence, 278 residues long: Shikimate dehydrogenase (NADP(+)) (278 aa).

Shikimate is bound by residues 19 to 21 (SFS) and threonine 66. The Proton acceptor role is filled by lysine 70. Residues asparagine 91 and aspartate 106 each coordinate shikimate. NADP(+) contacts are provided by residues 130 to 134 (GSGGA) and leucine 222. Tyrosine 224 provides a ligand contact to shikimate. NADP(+) is bound at residue glycine 245.

This sequence belongs to the shikimate dehydrogenase family. As to quaternary structure, homodimer.

The catalysed reaction is shikimate + NADP(+) = 3-dehydroshikimate + NADPH + H(+). It functions in the pathway metabolic intermediate biosynthesis; chorismate biosynthesis; chorismate from D-erythrose 4-phosphate and phosphoenolpyruvate: step 4/7. Involved in the biosynthesis of the chorismate, which leads to the biosynthesis of aromatic amino acids. Catalyzes the reversible NADPH linked reduction of 3-dehydroshikimate (DHSA) to yield shikimate (SA). This chain is Shikimate dehydrogenase (NADP(+)), found in Methanococcus maripaludis (strain DSM 14266 / JCM 13030 / NBRC 101832 / S2 / LL).